A 202-amino-acid chain; its full sequence is Inner membrane-spanning protein YciB (202 aa).

6 helical membrane passes run 3 to 23 (ILFDLLPVILFFVAYKIAGGN), 46 to 66 (ILLATAVAILATIAQIGWVWM), 73 to 93 (TMLWISLAIIAVFGGATLFFH), 100 to 120 (WKPTALYWLFGGTLTVSAVIF), 145 to 165 (LAWAGFFILMGFLNLYVAYNF), and 173 to 193 (FKLFGGMGLMLLFVLGQGFYL).

The protein belongs to the YciB family.

Its subcellular location is the cell inner membrane. Plays a role in cell envelope biogenesis, maintenance of cell envelope integrity and membrane homeostasis. The sequence is that of Inner membrane-spanning protein YciB from Aromatoleum aromaticum (strain DSM 19018 / LMG 30748 / EbN1) (Azoarcus sp. (strain EbN1)).